Here is an 80-residue protein sequence, read N- to C-terminus: MPFRFGTQPRRFPVEGGDSSIGLEPGLSSSAACNGKEMSPTRQLRRCPGSHCLTITDVPITVYATMRKPPAQSSKEMHPK.

The disordered stretch occupies residues 1 to 44 (MPFRFGTQPRRFPVEGGDSSIGLEPGLSSSAACNGKEMSPTRQL).

The protein belongs to the FAM229 family.

The sequence is that of Protein FAM229B (FAM229B) from Macaca fascicularis (Crab-eating macaque).